The following is a 589-amino-acid chain: Arginine--tRNA ligase (589 aa).

The 'HIGH' region motif lies at 131-141; that stretch reads ANPTGPLHVGH.

Belongs to the class-I aminoacyl-tRNA synthetase family. In terms of assembly, monomer.

It is found in the cytoplasm. It catalyses the reaction tRNA(Arg) + L-arginine + ATP = L-arginyl-tRNA(Arg) + AMP + diphosphate. The sequence is that of Arginine--tRNA ligase from Legionella pneumophila subsp. pneumophila (strain Philadelphia 1 / ATCC 33152 / DSM 7513).